The primary structure comprises 301 residues: Aspartate carbamoyltransferase catalytic subunit (301 aa).

Residues Arg54 and Thr55 each contribute to the carbamoyl phosphate site. Lys82 lines the L-aspartate pocket. Residues Arg104, His132, and Gln135 each contribute to the carbamoyl phosphate site. Residues Arg165 and Arg217 each contribute to the L-aspartate site. 2 residues coordinate carbamoyl phosphate: Gly257 and Pro258.

It belongs to the aspartate/ornithine carbamoyltransferase superfamily. ATCase family. In terms of assembly, heterododecamer (2C3:3R2) of six catalytic PyrB chains organized as two trimers (C3), and six regulatory PyrI chains organized as three dimers (R2).

The enzyme catalyses carbamoyl phosphate + L-aspartate = N-carbamoyl-L-aspartate + phosphate + H(+). It participates in pyrimidine metabolism; UMP biosynthesis via de novo pathway; (S)-dihydroorotate from bicarbonate: step 2/3. Catalyzes the condensation of carbamoyl phosphate and aspartate to form carbamoyl aspartate and inorganic phosphate, the committed step in the de novo pyrimidine nucleotide biosynthesis pathway. This is Aspartate carbamoyltransferase catalytic subunit from Thermus aquaticus.